The primary structure comprises 308 residues: Methionyl-tRNA formyltransferase (308 aa).

110–113 is a (6S)-5,6,7,8-tetrahydrofolate binding site; it reads SLLP.

Belongs to the Fmt family.

The catalysed reaction is L-methionyl-tRNA(fMet) + (6R)-10-formyltetrahydrofolate = N-formyl-L-methionyl-tRNA(fMet) + (6S)-5,6,7,8-tetrahydrofolate + H(+). Its function is as follows. Attaches a formyl group to the free amino group of methionyl-tRNA(fMet). The formyl group appears to play a dual role in the initiator identity of N-formylmethionyl-tRNA by promoting its recognition by IF2 and preventing the misappropriation of this tRNA by the elongation apparatus. In Mycobacterium sp. (strain KMS), this protein is Methionyl-tRNA formyltransferase.